The primary structure comprises 716 residues: Hepatocyte growth factor-like protein (716 aa).

The first 18 residues, 1–18, serve as a signal peptide directing secretion; that stretch reads MGWLPLLLLLVQCSRALG. The 87-residue stretch at 19-105 folds into the PAN domain; sequence QRSPLNDFQL…SLCHLFQKKD (87 aa). Intrachain disulfides connect C56-C78, C60-C66, C110-C186, C131-C169, C157-C181, C191-C268, C194-C333, C212-C251, C240-C263, C292-C370, C313-C352, C341-C364, C379-C457, C400-C440, C428-C452, C477-C593, C512-C528, C607-C672, C637-C651, and C662-C690. A glycan (N-linked (GlcNAc...) asparagine) is linked at N72. Kringle domains lie at 110–186, 191–268, 292–370, and 379–457; these read CIMD…IKTC, CVLC…LPSC, CFRG…IPRC, and CYHG…LQRC. N173 is a glycosylation site (N-linked (GlcNAc...) asparagine). The N-linked (GlcNAc...) asparagine glycan is linked to N305. The 226-residue stretch at 489-714 folds into the Peptidase S1 domain; that stretch reads VVGGHPGNSP…FVDWINKVMQ (226 aa). N-linked (GlcNAc...) asparagine glycosylation occurs at N620.

Belongs to the peptidase S1 family. Plasminogen subfamily. As to quaternary structure, dimer of an alpha chain and a beta chain linked by a disulfide bond. Interacts (via beta chain) with MST1R (via SEMA domain). In terms of processing, cleaved after Arg-488, probably by HPN/Hepsin, to yield the active form consisting of two disulfide-linked chains. In terms of tissue distribution, liver. Lower levels in lung, placenta and adrenal.

The protein resides in the secreted. This Mus musculus (Mouse) protein is Hepatocyte growth factor-like protein (Mst1).